An 854-amino-acid polypeptide reads, in one-letter code: Selenocysteine insertion sequence-binding protein 2 (854 aa).

Disordered stretches follow at residues 332 to 351, 356 to 394, 417 to 445, and 488 to 619; these read ADPK…DPSY, HIIH…KYEV, ERRD…KKSQ, and ECAS…PNHT. Polar residues-rich tracts occupy residues 338-350 and 361-372; these read SIPS…SDPS and TQKSKASQGSDL. Residues 380 to 387 carry the Nuclear localization signal motif; sequence KNKKKKEK. Polar residues predominate over residues 426-445; it reads KFQSKQQPQDNFKNNVKKSQ. Residues 536 to 547 are compositionally biased toward basic and acidic residues; it reads ILKERQERKQRL. Positions 548–559 are enriched in polar residues; sequence QENAVSPAFTSD. Acidic residues predominate over residues 560–572; that stretch reads DTQDGESGGDDQF. The span at 593–611 shows a compositional bias: basic and acidic residues; the sequence is VEDKSEEPPGTELQRDTEA. Residues 673-694 form an RNA-binding region; it reads LVLGLREVLKHLKLKKLKCVII. A disordered region spans residues 787 to 812; that stretch reads EPRPQAPPSLPTQGPSCPAEDGPPAL.

As to expression, expressed at high levels in testis.

The protein localises to the nucleus. It is found in the mitochondrion. Functionally, mRNA-binding protein that binds to the SECIS (selenocysteine insertion sequence) element present in the 3'-UTR of mRNAs encoding selenoproteins and facilitates the incorporation of the rare amino acid selenocysteine. Insertion of selenocysteine at UGA codons is mediated by SECISBP2 and EEFSEC: SECISBP2 (1) specifically binds the SECIS sequence once the 80S ribosome encounters an in-frame UGA codon and (2) contacts the RPS27A/eS31 of the 40S ribosome before ribosome stalling. (3) GTP-bound EEFSEC then delivers selenocysteinyl-tRNA(Sec) to the 80S ribosome and adopts a preaccommodated state conformation. (4) After GTP hydrolysis, EEFSEC dissociates from the assembly, selenocysteinyl-tRNA(Sec) accommodates, and peptide bond synthesis and selenoprotein elongation occur. This Homo sapiens (Human) protein is Selenocysteine insertion sequence-binding protein 2.